The chain runs to 338 residues: Dodecaprenyl-phosphate galacturonate synthase (338 aa).

Transmembrane regions (helical) follow at residues 254–274 (FFGSLGLGLGALAMLILLYLG) and 289–309 (MLMVGVVLLLSSVQMITTGIL).

The protein belongs to the glycosyltransferase 2 family.

It localises to the cell membrane. The catalysed reaction is di-trans,nona-cis-dodecaprenyl phosphate + UDP-alpha-D-galacturonate = beta-D-galacturonosyl di-trans,nona-cis-dodecaprenyl phosphate + UDP. Functionally, glycosyltransferase that catalyzes the synthesis of dodecaprenyl-phosphate galacturonate (Dod-P-GalA), likely from UDP-GalA and dodecaprenyl-phosphate. Dod-P-GalA is the lipid donor required for GalA transfer to lipopolysaccharide (LPS) specific residues catalyzed by the GalA transferases RgtA, RgtB, RgtC and RgtD. The sequence is that of Dodecaprenyl-phosphate galacturonate synthase from Rhizobium johnstonii (strain DSM 114642 / LMG 32736 / 3841) (Rhizobium leguminosarum bv. viciae).